We begin with the raw amino-acid sequence, 109 residues long: Cell division protein ZapA (109 aa).

Residues 21–97 (PEQQEALNQA…QTIEQALVEQ (77 aa)) adopt a coiled-coil conformation.

The protein belongs to the ZapA family. Type 1 subfamily. In terms of assembly, homodimer. Interacts with FtsZ.

Its subcellular location is the cytoplasm. Activator of cell division through the inhibition of FtsZ GTPase activity, therefore promoting FtsZ assembly into bundles of protofilaments necessary for the formation of the division Z ring. It is recruited early at mid-cell but it is not essential for cell division. The protein is Cell division protein ZapA of Sodalis glossinidius (strain morsitans).